Here is a 160-residue protein sequence, read N- to C-terminus: C-type lectin mosGCTL-1 (160 aa).

The signal sequence occupies residues 1–20; sequence MLTKGITLILLLVLVHSSHG. In terms of domain architecture, C-type lectin spans 23–140; it reads TPNRKFYIPS…YHWSWNDNTC (118 aa). Disulfide bonds link Cys44-Cys140 and Cys120-Cys140. Residue Asn76 is glycosylated (N-linked (GlcNAc...) asparagine).

Interacts with putative receptor-type tyrosine-protein phosphatase mosPTP-1; the interaction probably mediates the recruitment of West Nile virus particles in complex with C-type lectin mosGCTL-1 to the cell surface. In terms of assembly, (Microbial infection) Interacts with envelope protein E and virions of West Nile virus in a calcium-dependent manner. In terms of tissue distribution, female salivary gland (at protein level).

The protein localises to the secreted. In terms of biological role, putative lectin. Its function is as follows. (Microbial infection) Facilitates West Nile virus infection in mosquitoes probably via capturing viral particles and presenting them to a ligand on the cell surface, thereby facilitating viral entry. The sequence is that of C-type lectin mosGCTL-1 from Aedes aegypti (Yellowfever mosquito).